Here is a 665-residue protein sequence, read N- to C-terminus: Succinate dehydrogenase [ubiquinone] flavoprotein subunit A, mitochondrial (665 aa).

The N-terminal 45 residues, 1–45 (MALLKVAPSRLLSRALQLASRVQNCTPTVTTARRNFHFTVYGRKD), are a transit peptide targeting the mitochondrion. Residues Ala72, Ala75, Thr94, Lys95, and Ser101 each coordinate FAD. His102 carries the tele-8alpha-FAD histidine modification. Residues Thr103, Gly108, Ala224, and Asp278 each coordinate FAD. The oxaloacetate site is built by His299, Arg343, and His410. The Proton acceptor role is filled by Arg343. An FAD-binding site is contributed by Glu443. Residues Arg454 and Ala457 each coordinate oxaloacetate. The FAD site is built by Ser459 and Leu460.

Belongs to the FAD-dependent oxidoreductase 2 family. FRD/SDH subfamily. Component of complex II composed of four subunits: a flavoprotein (FP), an iron-sulfur protein (IP), and a cytochrome b composed of a large and a small subunit. It depends on FAD as a cofactor.

It localises to the mitochondrion inner membrane. The enzyme catalyses a ubiquinone + succinate = a ubiquinol + fumarate. The catalysed reaction is (R)-malate + a quinone = enol-oxaloacetate + a quinol. It catalyses the reaction (S)-malate + a quinone = enol-oxaloacetate + a quinol. It participates in carbohydrate metabolism; tricarboxylic acid cycle; fumarate from succinate (eukaryal route): step 1/1. Its activity is regulated as follows. Enol-oxaloacetate inhibits the succinate dehydrogenase activity. Flavoprotein (FP) subunit of succinate dehydrogenase (SDH) that is involved in complex II of the mitochondrial electron transport chain and is responsible for transferring electrons from succinate to ubiquinone (coenzyme Q). SDH also oxidizes malate to the non-canonical enol form of oxaloacetate, enol-oxaloacetate. Enol-oxaloacetate, which is a potent inhibitor of the succinate dehydrogenase activity, is further isomerized into keto-oxaloacetate. The polypeptide is Succinate dehydrogenase [ubiquinone] flavoprotein subunit A, mitochondrial (sdha-a) (Xenopus laevis (African clawed frog)).